The chain runs to 208 residues: GATA transcription factor 29 (208 aa).

The segment at 155–208 adopts a GATA-type; atypical zinc-finger fold; the sequence is GMKKCTNMNCNALNTPMWRRGPLGPKSLCNACGIKFRKEEERKAKRNVVIVLDD.

The protein belongs to the type IV zinc-finger family. Class B subfamily.

Its subcellular location is the nucleus. In terms of biological role, transcriptional regulator that specifically binds 5'-GATA-3' or 5'-GAT-3' motifs within gene promoters. The protein is GATA transcription factor 29 (GATA29) of Arabidopsis thaliana (Mouse-ear cress).